The sequence spans 151 residues: Arginine regulator (151 aa).

Belongs to the ArgR family.

The protein localises to the cytoplasm. It participates in amino-acid degradation; L-arginine degradation via ADI pathway. In terms of biological role, regulates the transcription of the arc operon, involved in arginine catabolism. The sequence is that of Arginine regulator (argR1) from Clostridium perfringens (strain 13 / Type A).